A 472-amino-acid chain; its full sequence is Carboxypeptidase Q (472 aa).

A signal peptide spans 1 to 20 (MKFLIFAFFGGVHLLSLCSG). Positions 21-44 (KAIYKNGISKRTFEEIKEEIASYG) are excised as a propeptide. Asparagine 61 and asparagine 179 each carry an N-linked (GlcNAc...) asparagine glycan. Residues histidine 290 and aspartate 302 each coordinate Zn(2+). Residue glutamate 336 is the Nucleophile of the active site. Glutamate 337 provides a ligand contact to Zn(2+). N-linked (GlcNAc...) asparagine glycosylation is found at asparagine 353 and asparagine 356. Aspartate 364 serves as a coordination point for Zn(2+). Residue asparagine 396 is glycosylated (N-linked (GlcNAc...) asparagine). Position 434 (histidine 434) interacts with Zn(2+).

This sequence belongs to the peptidase M28 family. Homodimer. The monomeric form is inactive while the homodimer is active. N-glycosylated. The secreted form is modified by hybrid or complex type oligosaccharide chains.

The protein localises to the endoplasmic reticulum. The protein resides in the golgi apparatus. It localises to the lysosome. Its subcellular location is the secreted. In terms of biological role, carboxypeptidase that may play an important role in the hydrolysis of circulating peptides. Catalyzes the hydrolysis of dipeptides with unsubstituted terminals into amino acids. May play a role in the liberation of thyroxine hormone from its thyroglobulin (Tg) precursor. This is Carboxypeptidase Q (CPQ) from Pongo abelii (Sumatran orangutan).